Consider the following 253-residue polypeptide: MRILLSNDDGYLAPGLAALYEALRPLAEILVMAPEQNCSGASNSLTLSRPLSVSRSAATGFYYVNGTPTDSVHVALTGMLDTKPDLVVSGINNGQNMGDDTLYSGTVAAATEGIMFGVPAIAFSLVHKEWAHLGDAARVAAEIVRHYLDHPLPGQPLLNINIPNLPYEELKGWRVTRLGKRHPSQPVIRQTNPRGEPIYWIGAAGDALDASEGTDFHATASGYVSITPLQLDLTHTQMLAATRDWARAGSGAS.

A divalent metal cation-binding residues include D8, D9, S39, and N92.

This sequence belongs to the SurE nucleotidase family. Requires a divalent metal cation as cofactor.

The protein localises to the cytoplasm. It carries out the reaction a ribonucleoside 5'-phosphate + H2O = a ribonucleoside + phosphate. Functionally, nucleotidase that shows phosphatase activity on nucleoside 5'-monophosphates. This chain is 5'-nucleotidase SurE, found in Burkholderia pseudomallei (strain 1710b).